The primary structure comprises 722 residues: Nucleolar protein 10 (722 aa).

5 WD repeats span residues 50 to 90 (EMPT…LKFE), 174 to 213 (TDAAEMNVCDINPVHQLFAAGTLEGRVDCWDPRVRTRVAA), 228 to 266 (EGLPSVSALKFNDSLGLAVGTSTGQILVYDLRSSRPLLV), 270 to 308 (YYGLPIKSLHFHNSLDLVLSADSKIIKMWNKDNGKVFSS), and 310 to 349 (EPQANINDVCLYPASGMLFTANEDPKMNTFYIPALGPAPR). Coiled-coil stretches lie at residues 423–476 (EYRK…ANVA) and 511–534 (SNVAERRRKSLLEEEQEQAEEEQE). Disordered stretches follow at residues 521 to 555 (LLEEEQEQAEEEQEPEGRGSSEDDSSDEDDKGWVQ), 572 to 607 (SYIQRQERRQQDRNTRLQSSDTHTQQSHGAQKPRFY), 616 to 635 (RSFSDVSRKQKTHKASLEER), and 664 to 722 (TEKQ…RRPF). A compositionally biased stretch (acidic residues) spans 523-534 (EEEQEQAEEEQE). The segment covering 572 to 586 (SYIQRQERRQQDRNT) has biased composition (basic and acidic residues). Residues 587–600 (RLQSSDTHTQQSHG) show a composition bias toward polar residues. A coiled-coil region spans residues 620–681 (DVSRKQKTHK…QAERDHHEER (62 aa)). Basic and acidic residues predominate over residues 664-682 (TEKQRFQQQAERDHHEERR). Basic residues-rich tracts occupy residues 683–693 (RIRRSAGHLHS) and 702–722 (GGGRGRGGGRGRGGGRGRRPF).

Belongs to the WD repeat NOL10/ENP2 family.

Its subcellular location is the nucleus. It is found in the nucleolus. The protein is Nucleolar protein 10 (nol10) of Danio rerio (Zebrafish).